The primary structure comprises 901 residues: Protein translocase subunit SecA (901 aa).

ATP is bound by residues Gln-87, 105–109 (GEGKT), and Asp-512. Residues Cys-885, Cys-887, Cys-896, and His-897 each contribute to the Zn(2+) site.

Belongs to the SecA family. As to quaternary structure, monomer and homodimer. Part of the essential Sec protein translocation apparatus which comprises SecA, SecYEG and auxiliary proteins SecDF-YajC and YidC. The cofactor is Zn(2+).

It localises to the cell inner membrane. The protein localises to the cytoplasm. It catalyses the reaction ATP + H2O + cellular proteinSide 1 = ADP + phosphate + cellular proteinSide 2.. Part of the Sec protein translocase complex. Interacts with the SecYEG preprotein conducting channel. Has a central role in coupling the hydrolysis of ATP to the transfer of proteins into and across the cell membrane, serving both as a receptor for the preprotein-SecB complex and as an ATP-driven molecular motor driving the stepwise translocation of polypeptide chains across the membrane. The chain is Protein translocase subunit SecA from Salmonella paratyphi A (strain ATCC 9150 / SARB42).